A 173-amino-acid chain; its full sequence is Dual-action ribosomal maturation protein DarP (173 aa).

It belongs to the DarP family.

It is found in the cytoplasm. Functionally, member of a network of 50S ribosomal subunit biogenesis factors which assembles along the 30S-50S interface, preventing incorrect 23S rRNA structures from forming. Promotes peptidyl transferase center (PTC) maturation. In Pseudomonas putida (strain W619), this protein is Dual-action ribosomal maturation protein DarP.